The following is a 286-amino-acid chain: Bifunctional protein FolD (286 aa).

Residues 165-167, serine 190, and valine 231 contribute to the NADP(+) site; that span reads GRS.

Belongs to the tetrahydrofolate dehydrogenase/cyclohydrolase family. Homodimer.

The catalysed reaction is (6R)-5,10-methylene-5,6,7,8-tetrahydrofolate + NADP(+) = (6R)-5,10-methenyltetrahydrofolate + NADPH. It catalyses the reaction (6R)-5,10-methenyltetrahydrofolate + H2O = (6R)-10-formyltetrahydrofolate + H(+). Its pathway is one-carbon metabolism; tetrahydrofolate interconversion. Its function is as follows. Catalyzes the oxidation of 5,10-methylenetetrahydrofolate to 5,10-methenyltetrahydrofolate and then the hydrolysis of 5,10-methenyltetrahydrofolate to 10-formyltetrahydrofolate. The sequence is that of Bifunctional protein FolD from Bacillus cytotoxicus (strain DSM 22905 / CIP 110041 / 391-98 / NVH 391-98).